A 199-amino-acid polypeptide reads, in one-letter code: Imidazole glycerol phosphate synthase subunit HisH (199 aa).

In terms of domain architecture, Glutamine amidotransferase type-1 spans 2–199 (RAVIIDYGVG…LTNVYRWLRK (198 aa)). Cys76 functions as the Nucleophile in the catalytic mechanism. Catalysis depends on residues His178 and Glu180.

As to quaternary structure, heterodimer of HisH and HisF.

It localises to the cytoplasm. The catalysed reaction is 5-[(5-phospho-1-deoxy-D-ribulos-1-ylimino)methylamino]-1-(5-phospho-beta-D-ribosyl)imidazole-4-carboxamide + L-glutamine = D-erythro-1-(imidazol-4-yl)glycerol 3-phosphate + 5-amino-1-(5-phospho-beta-D-ribosyl)imidazole-4-carboxamide + L-glutamate + H(+). It catalyses the reaction L-glutamine + H2O = L-glutamate + NH4(+). It participates in amino-acid biosynthesis; L-histidine biosynthesis; L-histidine from 5-phospho-alpha-D-ribose 1-diphosphate: step 5/9. IGPS catalyzes the conversion of PRFAR and glutamine to IGP, AICAR and glutamate. The HisH subunit catalyzes the hydrolysis of glutamine to glutamate and ammonia as part of the synthesis of IGP and AICAR. The resulting ammonia molecule is channeled to the active site of HisF. The polypeptide is Imidazole glycerol phosphate synthase subunit HisH (Sulfolobus acidocaldarius (strain ATCC 33909 / DSM 639 / JCM 8929 / NBRC 15157 / NCIMB 11770)).